The primary structure comprises 248 residues: Regulator of G-protein signaling 7-binding protein A (248 aa).

The interval 1–32 (MSSAPNGRKNRPRTAGTIFQIGGKAPSRESER) is disordered. 2 S-palmitoyl cysteine lipidation sites follow: C243 and C244.

It belongs to the RGS7BP/RGS9BP family. Palmitoylated. Undergoes rapid palmitoylation turnover. Palmitoylation regulates the cell membrane and nuclear shuttling and the regulation of GPCR signaling. Upon depalmitoylation, it is targeted from the plasma membrane into the nucleus. GPCR signaling inhibits depalmitoylation and promotes localization to the plasma membrane.

It is found in the nucleus. The protein resides in the cytoplasm. Its subcellular location is the cell membrane. Regulator of G protein-coupled receptor (GPCR) signaling. Regulatory subunit of the R7-Gbeta5 complexes that acts by controlling the subcellular location of the R7-Gbeta5 complexes. When palmitoylated, it targets the R7-Gbeta5 complexes to the plasma membrane, leading to inhibit G protein alpha subunits. When it is unpalmitoylated, the R7-Gbeta5 complexes undergo a nuclear/cytoplasmic shuttling. The polypeptide is Regulator of G-protein signaling 7-binding protein A (rgs7bpa) (Danio rerio (Zebrafish)).